We begin with the raw amino-acid sequence, 319 residues long: tRNA uridine(34) hydroxylase (319 aa).

A Rhodanese domain is found at 124-218 (LDEDTVILDA…YGKNEETKGE (95 aa)). The active-site Cysteine persulfide intermediate is the C178.

Belongs to the TrhO family.

The catalysed reaction is uridine(34) in tRNA + AH2 + O2 = 5-hydroxyuridine(34) in tRNA + A + H2O. Catalyzes oxygen-dependent 5-hydroxyuridine (ho5U) modification at position 34 in tRNAs. This is tRNA uridine(34) hydroxylase from Listeria welshimeri serovar 6b (strain ATCC 35897 / DSM 20650 / CCUG 15529 / CIP 8149 / NCTC 11857 / SLCC 5334 / V8).